The sequence spans 463 residues: Probable cysteine protease RD21B (463 aa).

The N-terminal stretch at 1–21 (MGFLKLSPMILLLAMIGVSYA) is a signal peptide. Residues 22–137 (MDMSIISYDE…DRYQARVGDA (116 aa)) constitute a propeptide, activation peptide. Asn92 carries N-linked (GlcNAc...) asparagine glycosylation. Disulfide bonds link Cys159-Cys201, Cys193-Cys234, Cys292-Cys343, Cys376-Cys388, and Cys382-Cys403. Cys162 is a catalytic residue. Residues His298 and Asn318 contribute to the active site. Residues 354–463 (KKGQNPPNPG…FWAKSRKHIA (110 aa)) constitute a propeptide, removed in mature form. Residue Asn415 is glycosylated (N-linked (GlcNAc...) asparagine).

Belongs to the peptidase C1 family. In terms of assembly, interacts with PRN2. Interacts with WSCP.

Functionally, probable thiol protease. The protein is Probable cysteine protease RD21B of Arabidopsis thaliana (Mouse-ear cress).